Consider the following 165-residue polypeptide: uncharacterized protein (165 aa).

A run of 6 helical transmembrane segments spans residues 6 to 26 (ILFP…SGQA), 28 to 48 (LFSG…AFVY), 54 to 74 (AVTP…HFFA), 78 to 98 (WVWW…SLLV), 110 to 130 (AVSM…MAWL), and 138 to 158 (ALLK…LLLI).

The protein localises to the cell membrane. This is an uncharacterized protein from Bacillus subtilis (strain 168).